A 261-amino-acid polypeptide reads, in one-letter code: Putative hydro-lyase Nther_1142 (261 aa).

The protein belongs to the D-glutamate cyclase family.

The sequence is that of Putative hydro-lyase Nther_1142 from Natranaerobius thermophilus (strain ATCC BAA-1301 / DSM 18059 / JW/NM-WN-LF).